Consider the following 579-residue polypeptide: Arginine--tRNA ligase (579 aa).

The 'HIGH' region motif lies at A127 to H137.

The protein belongs to the class-I aminoacyl-tRNA synthetase family. In terms of assembly, monomer.

Its subcellular location is the cytoplasm. The enzyme catalyses tRNA(Arg) + L-arginine + ATP = L-arginyl-tRNA(Arg) + AMP + diphosphate. The protein is Arginine--tRNA ligase of Acidithiobacillus ferrooxidans (strain ATCC 23270 / DSM 14882 / CIP 104768 / NCIMB 8455) (Ferrobacillus ferrooxidans (strain ATCC 23270)).